Reading from the N-terminus, the 100-residue chain is uncharacterized protein (100 aa).

The signal sequence occupies residues 1–23; that stretch reads MKYVALAFVLSLVILQISAQVGA.

Nacreous layer of shell (at protein level). Expressed primarily in the mantle with highest level in the mantle pallium and lower level in the mantle edge.

It is found in the secreted. This is an uncharacterized protein from Margaritifera margaritifera (Freshwater pearl mussel).